Here is a 296-residue protein sequence, read N- to C-terminus: Probable AP endonuclease (296 aa).

C16 and C20 form a disulfide bridge. Positions 78, 115, 142, 182, 218, 231, 233, and 271 each coordinate Zn(2+).

The protein belongs to the AP endonuclease 2 family. Zn(2+) is required as a cofactor.

It localises to the host nucleus. Its subcellular location is the host cytoplasm. It is found in the virion. Endonuclease of the viral base excision repair system that catalyzes DNA cleavage reaction at the apurinic or apyrimidinic sites (AP sites). Cleaves phosphodiester bonds on the 5' side of AP sites. In addition to endonuclease activity, the AP endonuclease has a proofreading 3'-5' exonuclease activity that is considerably more efficient in the elimination of a mismatch than in that of a correctly paired base. Displays 3'-phosphatase and 3'-repair diesterase activities. The single nucleotide gaps generated by the AP endonuclease are filled by the viral repair DNA polymerase X and the DNA ligase. The polypeptide is Probable AP endonuclease (Ornithodoros (relapsing fever ticks)).